Reading from the N-terminus, the 232-residue chain is Aspartate/glutamate leucyltransferase (232 aa).

It belongs to the R-transferase family. Bpt subfamily.

The protein localises to the cytoplasm. The catalysed reaction is N-terminal L-glutamyl-[protein] + L-leucyl-tRNA(Leu) = N-terminal L-leucyl-L-glutamyl-[protein] + tRNA(Leu) + H(+). It carries out the reaction N-terminal L-aspartyl-[protein] + L-leucyl-tRNA(Leu) = N-terminal L-leucyl-L-aspartyl-[protein] + tRNA(Leu) + H(+). Its function is as follows. Functions in the N-end rule pathway of protein degradation where it conjugates Leu from its aminoacyl-tRNA to the N-termini of proteins containing an N-terminal aspartate or glutamate. The sequence is that of Aspartate/glutamate leucyltransferase from Vibrio vulnificus (strain YJ016).